The sequence spans 121 residues: uncharacterized protein (121 aa).

Transmembrane regions (helical) follow at residues 12–32 (MIGI…HPGV), 35–55 (VIQP…FGGL), and 67–87 (VFVV…YVGD).

This sequence belongs to the sbp family.

It is found in the cell membrane. This is an uncharacterized protein from Mycobacterium bovis (strain ATCC BAA-935 / AF2122/97).